A 396-amino-acid polypeptide reads, in one-letter code: Phosphoglycerate kinase (396 aa).

Residues 23–25 (DFN), arginine 38, 61–64 (HMGK), arginine 122, and arginine 155 contribute to the substrate site. ATP-binding positions include lysine 206, glycine 296, glutamate 327, and 353–356 (GGDS).

It belongs to the phosphoglycerate kinase family. In terms of assembly, monomer.

It localises to the cytoplasm. The catalysed reaction is (2R)-3-phosphoglycerate + ATP = (2R)-3-phospho-glyceroyl phosphate + ADP. Its pathway is carbohydrate degradation; glycolysis; pyruvate from D-glyceraldehyde 3-phosphate: step 2/5. The sequence is that of Phosphoglycerate kinase from Clostridium botulinum (strain Eklund 17B / Type B).